A 118-amino-acid chain; its full sequence is Large ribosomal subunit protein bL20 (118 aa).

Belongs to the bacterial ribosomal protein bL20 family.

Its function is as follows. Binds directly to 23S ribosomal RNA and is necessary for the in vitro assembly process of the 50S ribosomal subunit. It is not involved in the protein synthesizing functions of that subunit. This chain is Large ribosomal subunit protein bL20, found in Ralstonia pickettii (strain 12J).